Reading from the N-terminus, the 321-residue chain is GTP cyclohydrolase FolE2 (321 aa).

It belongs to the GTP cyclohydrolase IV family.

It carries out the reaction GTP + H2O = 7,8-dihydroneopterin 3'-triphosphate + formate + H(+). It participates in cofactor biosynthesis; 7,8-dihydroneopterin triphosphate biosynthesis; 7,8-dihydroneopterin triphosphate from GTP: step 1/1. Its function is as follows. Converts GTP to 7,8-dihydroneopterin triphosphate. This is GTP cyclohydrolase FolE2 from Paracoccus denitrificans (strain Pd 1222).